Here is a 452-residue protein sequence, read N- to C-terminus: Serine--tRNA ligase (452 aa).

251–253 is a binding site for L-serine; sequence TSE. Residue 282–284 coordinates ATP; that stretch reads RSE. An L-serine-binding site is contributed by Glu305. 369–372 is a binding site for ATP; the sequence is EISS. Ser404 is a binding site for L-serine.

This sequence belongs to the class-II aminoacyl-tRNA synthetase family. Type-1 seryl-tRNA synthetase subfamily. As to quaternary structure, homodimer. The tRNA molecule binds across the dimer.

The protein resides in the cytoplasm. The enzyme catalyses tRNA(Ser) + L-serine + ATP = L-seryl-tRNA(Ser) + AMP + diphosphate + H(+). The catalysed reaction is tRNA(Sec) + L-serine + ATP = L-seryl-tRNA(Sec) + AMP + diphosphate + H(+). The protein operates within aminoacyl-tRNA biosynthesis; selenocysteinyl-tRNA(Sec) biosynthesis; L-seryl-tRNA(Sec) from L-serine and tRNA(Sec): step 1/1. Functionally, catalyzes the attachment of serine to tRNA(Ser). Is also able to aminoacylate tRNA(Sec) with serine, to form the misacylated tRNA L-seryl-tRNA(Sec), which will be further converted into selenocysteinyl-tRNA(Sec). In Albidiferax ferrireducens (strain ATCC BAA-621 / DSM 15236 / T118) (Rhodoferax ferrireducens), this protein is Serine--tRNA ligase.